We begin with the raw amino-acid sequence, 723 residues long: PX domain-containing protein EREL1 (723 aa).

The segment covering 1 to 12 (MMQRRSPPKHRH) has biased composition (basic residues). Residues 1 to 26 (MMQRRSPPKHRHDGTSPLPLGMDWSP) are disordered. The PX domain occupies 48-165 (YCVTIPSWIV…SFLELEAAAR (118 aa)). 2 disordered regions span residues 169–193 (QDVD…MVHP) and 209–230 (YGSD…QDDI). The segment covering 172-193 (DQNASDSNNDRSSTSSSPMVHP) has biased composition (low complexity). A compositionally biased stretch (polar residues) spans 209-225 (YGSDTAYETSEVGSPSV). Coiled coils occupy residues 401-474 (NERL…LRQK) and 503-555 (KHVL…LEKE). The disordered stretch occupies residues 698 to 723 (DVKTTEDVNEENSDEKDEASRETLKR). Residues 704–714 (DVNEENSDEKD) are compositionally biased toward acidic residues.

It localises to the cytoplasm. The protein resides in the cytosol. The protein localises to the endosome membrane. Its function is as follows. Acts as an effector of RABF2A and RABF2B. Involved in vacuolar transport of storage proteins. Regulates membrane trafficking to protein storage vacuoles (PSVs). Binds specifically to phosphatidylinositol 3-monophosphate (PtdIns3P). In Arabidopsis thaliana (Mouse-ear cress), this protein is PX domain-containing protein EREL1.